The sequence spans 336 residues: F-box protein PP2-B1 (336 aa).

Residues 1-22 (MEQIHGGDSNSGGGGGGSSRND) are disordered. A compositionally biased stretch (gly residues) spans 9–18 (SNSGGGGGGS). In terms of domain architecture, F-box spans 29–75 (ASRFDALPEDCISKVISHTSPRDACVVASVSKSVKSAAQSDLVWEMF).

Part of a SCF (ASK-cullin-F-box) protein ligase complex. Interacts with SKP1A/ASK1 and SPK1B/ASK2.

It localises to the nucleus. The protein operates within protein modification; protein ubiquitination. Functionally, component of SCF(ASK-cullin-F-box) E3 ubiquitin ligase complexes, which may mediate the ubiquitination and subsequent proteasomal degradation of target proteins. The polypeptide is F-box protein PP2-B1 (PP2B1) (Arabidopsis thaliana (Mouse-ear cress)).